We begin with the raw amino-acid sequence, 190 residues long: Nucleoside triphosphate pyrophosphatase (190 aa).

Asp-69 serves as the catalytic Proton acceptor.

This sequence belongs to the Maf family. The cofactor is a divalent metal cation.

Its subcellular location is the cytoplasm. The enzyme catalyses a ribonucleoside 5'-triphosphate + H2O = a ribonucleoside 5'-phosphate + diphosphate + H(+). It catalyses the reaction a 2'-deoxyribonucleoside 5'-triphosphate + H2O = a 2'-deoxyribonucleoside 5'-phosphate + diphosphate + H(+). Its function is as follows. Nucleoside triphosphate pyrophosphatase. May have a dual role in cell division arrest and in preventing the incorporation of modified nucleotides into cellular nucleic acids. The polypeptide is Nucleoside triphosphate pyrophosphatase (Helicobacter pylori (strain HPAG1)).